The chain runs to 476 residues: Immune evasion protein OPG047 (476 aa).

The BTB domain maps to 10-90; that stretch reads CKNILALSMT…SYTGKVYIDS (81 aa). A BACK domain is found at 125-218; the sequence is CVECYMMGIE…SNYLSPRGIN (94 aa). Kelch repeat units follow at residues 269 to 315, 316 to 359, 361 to 404, 406 to 443, and 444 to 476; these read VVYL…PANN, KLYV…SINN, IYVM…VFGR, LFLV…IVDN, and KLLL…WDGK.

It belongs to the orthopoxvirus OPG047 family.

In terms of biological role, might have a role in the suppression of host immune response. The polypeptide is Immune evasion protein OPG047 (OPG047) (Vaccinia virus (strain Ankara) (VACV)).